The following is a 546-amino-acid chain: Protein RDR1 (546 aa).

A DNA-binding region (zn(2)-C6 fungal-type) is located at residues 20–46 (CVPCRERKRKCNGKSPCEMCVAYGYVC).

It localises to the nucleus. Transcriptional repressor of multidrug resistance genes, such as PDR5. Required for growth on non-fermentable carbon sources like lactate or glycerol. This is Protein RDR1 (RDR1) from Saccharomyces cerevisiae (strain ATCC 204508 / S288c) (Baker's yeast).